A 177-amino-acid polypeptide reads, in one-letter code: Large ribosomal subunit protein uL10 (177 aa).

This sequence belongs to the universal ribosomal protein uL10 family. In terms of assembly, part of the ribosomal stalk of the 50S ribosomal subunit. The N-terminus interacts with L11 and the large rRNA to form the base of the stalk. The C-terminus forms an elongated spine to which L12 dimers bind in a sequential fashion forming a multimeric L10(L12)X complex.

Functionally, forms part of the ribosomal stalk, playing a central role in the interaction of the ribosome with GTP-bound translation factors. The polypeptide is Large ribosomal subunit protein uL10 (Xanthomonas campestris pv. campestris (strain 8004)).